Here is a 199-residue protein sequence, read N- to C-terminus: Golgi to ER traffic protein 1 (199 aa).

Over 1 to 11 the chain is Lumenal; the sequence is MLLPDLHPYTI. Residues 12–31 form a helical membrane-spanning segment; the sequence is LLSIFLVLVVKQLVATIGKS. Residues 32–115 are Cytoplasmic-facing; that stretch reads TIQEFVWLVY…SIDKASNALI (84 aa). The stretch at 76–116 forms a coiled coil; the sequence is YAKWTKLNRQADKLSAELQKLNQEIQQQKSSIDKASNALIL. A helical transmembrane segment spans residues 116–136; sequence LVLTTLPIWIARVFYRKTHLF. Residues 137 to 160 lie on the Lumenal side of the membrane; sequence YIRQGIFPKYVEWVLALPFLPNGA. Residues 161–177 form a helical membrane-spanning segment; that stretch reads VGLTIWMFAVNSVVSNF. Residues 178-199 lie on the Cytoplasmic side of the membrane; the sequence is SFLVSFPFAKRVSKPVRDTKVE.

The protein belongs to the WRB/GET1 family. As to quaternary structure, component of the Golgi to ER traffic (GET) complex, which is composed of GET1, GET2 and GET3. Within the complex, GET1 and GET2 form a heterotetramer which is stabilized by phosphatidylinositol binding and which binds to the GET3 homodimer.

The protein localises to the endoplasmic reticulum membrane. It is found in the golgi apparatus membrane. In terms of biological role, required for the post-translational delivery of tail-anchored (TA) proteins to the endoplasmic reticulum. Together with GET2, acts as a membrane receptor for soluble GET3, which recognizes and selectively binds the transmembrane domain of TA proteins in the cytosol. The GET complex cooperates with the HDEL receptor ERD2 to mediate the ATP-dependent retrieval of resident ER proteins that contain a C-terminal H-D-E-L retention signal from the Golgi to the ER. The chain is Golgi to ER traffic protein 1 from Candida albicans (strain WO-1) (Yeast).